A 685-amino-acid polypeptide reads, in one-letter code: DNA-directed RNA polymerase subunit beta' (685 aa).

Residues Cys69, Cys71, Cys87, and Cys90 each contribute to the Zn(2+) site. Positions 489, 491, and 493 each coordinate Mg(2+).

It belongs to the RNA polymerase beta' chain family. RpoC1 subfamily. In plastids the minimal PEP RNA polymerase catalytic core is composed of four subunits: alpha, beta, beta', and beta''. When a (nuclear-encoded) sigma factor is associated with the core the holoenzyme is formed, which can initiate transcription. Mg(2+) serves as cofactor. Requires Zn(2+) as cofactor.

The protein localises to the plastid. Its subcellular location is the chloroplast. The enzyme catalyses RNA(n) + a ribonucleoside 5'-triphosphate = RNA(n+1) + diphosphate. Its function is as follows. DNA-dependent RNA polymerase catalyzes the transcription of DNA into RNA using the four ribonucleoside triphosphates as substrates. This Gossypium hirsutum (Upland cotton) protein is DNA-directed RNA polymerase subunit beta'.